The primary structure comprises 593 residues: Scarecrow-like protein 1 (593 aa).

2 disordered regions span residues 29 to 61 (NPKLYTLNENGNNNGVSSAQIFDPDRSKNPCLT) and 188 to 216 (YQNESEQHQDSPKESSSADSNSHVSSKEV). A compositionally biased stretch (polar residues) spans 35 to 48 (LNENGNNNGVSSAQ). A compositionally biased stretch (low complexity) spans 202–211 (SSSADSNSHV). Positions 213–593 (SKEVVSQATP…KSLIVASAWR (381 aa)) constitute a GRAS domain. The segment at 220–280 (ATPKQILISC…AARMAASGKF (61 aa)) is leucine repeat I (LRI). A VHIID region spans residues 299–364 (MQVLFEVCPC…GKRPRLRLTG (66 aa)). The VHIID motif lies at 330 to 334 (VHIID). The tract at residues 380 to 411 (IIGLRLEQLAEDNGVSFKFKAMPSKTSIVSPS) is leucine repeat II (LRII). Residues 421–515 (LIVNFAFQLH…RQCLARDIVN (95 aa)) are PFYRE. Positions 518 to 593 (ACEGEERIER…KSLIVASAWR (76 aa)) are SAW.

This sequence belongs to the GRAS family. In terms of tissue distribution, expressed in seedlings, roots, shoots, leaves, flowers and siliques.

The protein localises to the nucleus. Probable transcription factor involved in plant development. The chain is Scarecrow-like protein 1 (SCL1) from Arabidopsis thaliana (Mouse-ear cress).